The following is a 189-amino-acid chain: MLLSDRDIRAEIAAKRLALEPFDDALVQPSSIDVRLDRMFRVFNNTRYTHIDPAMQQDELTTLVEPAEGEPFVLHPGEFVLGSTLELCTLPDDLAGRLEGKSSLGRLGLLTHSTAGFIDPGFSGHITLELSNVANLPITLWPGMKIGQLCLLRLTSPAENPYGSAAVGSKYQGQRGPTPSRSHLNFIKS.

DCTP is bound by residues 101–106 (KSSLGR), Asp-119, 127–129 (TLE), Gln-148, Tyr-162, and Gln-174. The active-site Proton donor/acceptor is the Glu-129. The tract at residues 166–189 (AVGSKYQGQRGPTPSRSHLNFIKS) is disordered. The segment covering 171–189 (YQGQRGPTPSRSHLNFIKS) has biased composition (polar residues).

It belongs to the dCTP deaminase family. As to quaternary structure, homotrimer.

The enzyme catalyses dCTP + 2 H2O = dUMP + NH4(+) + diphosphate. Its pathway is pyrimidine metabolism; dUMP biosynthesis; dUMP from dCTP: step 1/1. Functionally, bifunctional enzyme that catalyzes both the deamination of dCTP to dUTP and the hydrolysis of dUTP to dUMP without releasing the toxic dUTP intermediate. The chain is dCTP deaminase, dUMP-forming from Mycolicibacterium smegmatis (strain ATCC 700084 / mc(2)155) (Mycobacterium smegmatis).